A 425-amino-acid chain; its full sequence is MTNVSERIYDSKNSLKFLDDEIYQSIERELQRQRSQLQLIASENFASKAVMEAQGSFLTNKYAEGYIGKRYYCGCEYVDEVENLAIERLCKLFNVRFANVQPHSGSQANQAVFASLLTPGDTILGLSISCGGHLTHGAAPNLSGKWFKSIQYAIDRGTCLLDMDEVERLALEHKPKLIIAGASAYPRRMDFKRFREIADKVSAYLLADIAHYAGLIAAGEYPSPAKYAHIITSTTHKTLRGPRGGVVITNDEALHKKVQSAVFPGLQGGPLMHVIAAKAVAFKEALAPEFKAYIKRVVENAKVLAQALQKHGLSVITGGTDSHIVLVDLRPQKLTGKGAVDSLERAGITCNKNSVPFDMEKPTITSGLRFGTAAETTRGLKAENFKEIADLINEVIQGLINGNNSDVERIVKNKVKKICDDFPIY.

Residue 132-134 (GHL) coordinates (6S)-5,6,7,8-tetrahydrofolate. K237 is subject to N6-(pyridoxal phosphate)lysine.

It belongs to the SHMT family. Homodimer. Requires pyridoxal 5'-phosphate as cofactor.

The protein localises to the cytoplasm. The enzyme catalyses (6R)-5,10-methylene-5,6,7,8-tetrahydrofolate + glycine + H2O = (6S)-5,6,7,8-tetrahydrofolate + L-serine. The protein operates within one-carbon metabolism; tetrahydrofolate interconversion. It participates in amino-acid biosynthesis; glycine biosynthesis; glycine from L-serine: step 1/1. In terms of biological role, catalyzes the reversible interconversion of serine and glycine with tetrahydrofolate (THF) serving as the one-carbon carrier. This reaction serves as the major source of one-carbon groups required for the biosynthesis of purines, thymidylate, methionine, and other important biomolecules. Also exhibits THF-independent aldolase activity toward beta-hydroxyamino acids, producing glycine and aldehydes, via a retro-aldol mechanism. This chain is Serine hydroxymethyltransferase, found in Wolbachia sp. subsp. Brugia malayi (strain TRS).